We begin with the raw amino-acid sequence, 270 residues long: Fluoride-specific ion channel FluC 1 (270 aa).

Helical transmembrane passes span 4 to 24 (IIIL…FIML), 35 to 55 (LDIL…TALY), 67 to 87 (IIGT…YGSV), and 96 to 116 (AFLI…VAVL). Residues G74 and S77 each contribute to the Na(+) site.

The protein belongs to the fluoride channel Fluc/FEX (TC 1.A.43) family.

It is found in the cell inner membrane. The enzyme catalyses fluoride(in) = fluoride(out). Na(+) is not transported, but it plays an essential structural role and its presence is essential for fluoride channel function. Its function is as follows. Fluoride-specific ion channel. Important for reducing fluoride concentration in the cell, thus reducing its toxicity. This chain is Fluoride-specific ion channel FluC 1, found in Brucella abortus biovar 1 (strain 9-941).